We begin with the raw amino-acid sequence, 425 residues long: D-amino acid dehydrogenase (425 aa).

3-17 (VLVMGAGVIGVTTAY) contributes to the FAD binding site.

It belongs to the DadA oxidoreductase family. FAD is required as a cofactor.

The catalysed reaction is a D-alpha-amino acid + A + H2O = a 2-oxocarboxylate + AH2 + NH4(+). It participates in amino-acid degradation; D-alanine degradation; NH(3) and pyruvate from D-alanine: step 1/1. Functionally, oxidative deamination of D-amino acids. The sequence is that of D-amino acid dehydrogenase from Rhodopseudomonas palustris (strain HaA2).